A 485-amino-acid polypeptide reads, in one-letter code: Aspartyl/glutamyl-tRNA(Asn/Gln) amidotransferase subunit B (485 aa).

This sequence belongs to the GatB/GatE family. GatB subfamily. In terms of assembly, heterotrimer of A, B and C subunits.

It catalyses the reaction L-glutamyl-tRNA(Gln) + L-glutamine + ATP + H2O = L-glutaminyl-tRNA(Gln) + L-glutamate + ADP + phosphate + H(+). It carries out the reaction L-aspartyl-tRNA(Asn) + L-glutamine + ATP + H2O = L-asparaginyl-tRNA(Asn) + L-glutamate + ADP + phosphate + 2 H(+). In terms of biological role, allows the formation of correctly charged Asn-tRNA(Asn) or Gln-tRNA(Gln) through the transamidation of misacylated Asp-tRNA(Asn) or Glu-tRNA(Gln) in organisms which lack either or both of asparaginyl-tRNA or glutaminyl-tRNA synthetases. The reaction takes place in the presence of glutamine and ATP through an activated phospho-Asp-tRNA(Asn) or phospho-Glu-tRNA(Gln). This chain is Aspartyl/glutamyl-tRNA(Asn/Gln) amidotransferase subunit B, found in Anaplasma marginale (strain Florida).